Here is a 741-residue protein sequence, read N- to C-terminus: Catalase-peroxidase 2 (741 aa).

Positions 1–27 (MKINTLPTLSALTLAMSLALGAGMATA) are cleaved as a signal peptide. Residues 106-229 (WHSAGVYRIF…MGATQMGLIY (124 aa)) constitute a cross-link (tryptophyl-tyrosyl-methioninium (Trp-Tyr) (with M-255)). Catalysis depends on H107, which acts as the Proton acceptor. The tryptophyl-tyrosyl-methioninium (Tyr-Met) (with W-106) cross-link spans 229–255 (YVNPEGPNGVPDPLASAKEIRDTFGRM). A heme b-binding site is contributed by H270.

This sequence belongs to the peroxidase family. Peroxidase/catalase subfamily. Homodimer or homotetramer. Heme b is required as a cofactor. Post-translationally, formation of the three residue Trp-Tyr-Met cross-link is important for the catalase, but not the peroxidase activity of the enzyme.

The enzyme catalyses H2O2 + AH2 = A + 2 H2O. It catalyses the reaction 2 H2O2 = O2 + 2 H2O. Functionally, bifunctional enzyme with both catalase and broad-spectrum peroxidase activity. The protein is Catalase-peroxidase 2 of Shewanella oneidensis (strain ATCC 700550 / JCM 31522 / CIP 106686 / LMG 19005 / NCIMB 14063 / MR-1).